The sequence spans 1038 residues: MDPNTIIEALRGTMDPALREAAERQLNEAHKSLNFVSTLLQITMSEQLDLPVRQAGVIYLKNMITQYWPDREATPGDIAPYTIPEEDRHCIRENIVEAIIHSPELIRVQLTTCIHHIIKHDYPSRWTAIVDKIGFYLQSDNSACWLGILLCLYQLVKNYEYKKPEERSPLVAAMQHFLPVLKDRFIQLLSDQSDQSVLIQKQIFKIFYALVQYTLPLELINQQNLTEWVEILKTVVNRDVPNETLQVEEDDRPELPWWKCKKWALHILARLFERYGSPGNVSKEYNEFAEVFLKAFAVGVQQVLLKVLYQYKEKQYMAPRVLQQTLNYINQGVSHALTWKNLKPHIQGIIQDVIFPLMCYTDADEELWQEDPYEYIRMKFDVFEDFISPTTAAQTLLFTACSKRKEVLQKTMGFCYQILTEPNADPRKKDGALHMIGSLAEILLKKKIYKDQMEYMLQNHVFPLFSSELGYMRARACWVLHYFCEVKFKSDQNLQTALELTRRCLIDDREMPVKVEAAIALQVLISNQEKAKEYITPFIRPVMQALLHIIRETENDDLTNVIQKMICEYSEEVTPIAVEMTQHLAMTFNQVIQTGPDEEGSDDKAVTAMGILNTIDTLLSVVEDHKEITQQLEGICLQVIGTVLQQHVLEFYEEIFSLAHSLTCQQVSPQMWQLLPLVFEVFQQDGFDYFTDMMPLLHNYVTVDTDTLLSDTKYLEMIYSMCKKVLTGVAGEDAECHAAKLLEVIILQCKGRGIDQCIPLFVEAALERLTREVKTSELRTMCLQVAIAALYYNPHLLLNTLENLRFPNNVEPVTNHFITQWLNDVDCFLGLHDRKMCVLGLCALIDMEQIPQVLNQVSGQILPAFILLFNGLKRAYACHAEHENDSDDDEDAEDDDETEELGSDEDDIDEDGQEYLEILAKQAGEDGDDEDWEEDDAEETALEGYSTIIDDEDNPVDEYQIFKAIFQTIQNRNPVWYQALTHGLNEEQRKQLQDIATLADQRRAAHESKMIEKHGGYKFSAPVVPSSFNFGGPAPGMN.

Methionine 1 carries the post-translational modification N-acetylmethionine. Positions 22-101 (AERQLNEAHK…RENIVEAIIH (80 aa)) constitute an Importin N-terminal domain. The disordered stretch occupies residues 881–910 (EHENDSDDDEDAEDDDETEELGSDEDDIDE). Positions 884–910 (NDSDDDEDAEDDDETEELGSDEDDIDE) are enriched in acidic residues. Serine 886 bears the Phosphoserine mark. A Phosphothreonine modification is found at threonine 898. 2 positions are modified to phosphoserine: serine 903 and serine 1020.

This sequence belongs to the importin beta family. Forms a heterodimer with KPNB1. Interacts with histone H1. Interacts with H2A, H2B, H3 and H4 histones. Interacts with SNUPN and XPO1. Interacts with RPS7 and RPL5. Interacts with RPL23A (via BIB domain). Binds directly to nuclear pore complexes. Interacts with SMAD4 and NUP93; translocates SMAD4 to the nucleus through the NPC upon BMP7 stimulation resulting in activation of SMAD4 signaling. Interacts with phosphorylated SMAD2; the interaction facilitates translocation of SMAD2 to the nucleus. Interacts with SRP19. Interacts with RUNX2; the interaction inhibits RUNX2 nuclear translocation in osteoblasts. Interacts with HDAC6, DLX3 and KLF4; the interaction facilitates HDAC6, DLX3 and KLF4 nuclear translocation in dental papilla cells.

It is found in the cytoplasm. Its subcellular location is the nucleus. Functionally, functions in nuclear protein import, either by acting as autonomous nuclear transport receptor or as an adapter-like protein in association with the importin-beta subunit KPNB1. Acting autonomously is thought to serve itself as receptor for nuclear localization signals (NLS) and to promote translocation of import substrates through the nuclear pore complex (NPC) by an energy requiring, Ran-dependent mechanism. At the nucleoplasmic side of the NPC, Ran binds to importin, the importin/substrate complex dissociates and importin is re-exported from the nucleus to the cytoplasm where GTP hydrolysis releases Ran. Mediates autonomously the nuclear import of ribosomal proteins RPL23A, RPS7 and RPL5. In association with KPNB1 mediates the nuclear import of H1 histone and the Ran-binding site of IPO7 is not required but synergizes with that of KPNB1 in importin/substrate complex dissociation. Promotes odontoblast differentiation via promoting nuclear translocation of DLX3, KLF4, SMAD2, thereby facilitating the transcription of target genes that play a role in odontoblast differentiation. Facilitates BMP4-induced translocation of SMAD1 to the nucleus and recruitment to the MSX1 gene promoter, thereby promotes the expression of the odontogenic regulator MSX1 in dental mesenchymal cells. Also promotes odontoblast differentiation by facilitating the nuclear translocation of HDAC6 and subsequent repression of RUNX2 expression. Inhibits osteoblast differentiation by inhibiting nuclear translocation of RUNX2 and therefore inhibition of RUNX2 target gene transcription. In vitro, mediates nuclear import of H2A, H2B, H3 and H4 histones. In Mus musculus (Mouse), this protein is Importin-7 (Ipo7).